A 586-amino-acid polypeptide reads, in one-letter code: Phosphomethylpyrimidine synthase (586 aa).

Residues Met1 to Pro59 are disordered. Residues Val22–Glu39 are compositionally biased toward basic and acidic residues. Residues Asn193, Met222, Tyr251, His287, Ser307–Gly309, Asp348–Arg351, and Glu387 contribute to the substrate site. Residue His391 participates in Zn(2+) binding. Residue Tyr414 coordinates substrate. His455 contributes to the Zn(2+) binding site. [4Fe-4S] cluster contacts are provided by Cys535, Cys538, and Cys543.

It belongs to the ThiC family. [4Fe-4S] cluster serves as cofactor.

It carries out the reaction 5-amino-1-(5-phospho-beta-D-ribosyl)imidazole + S-adenosyl-L-methionine = 4-amino-2-methyl-5-(phosphooxymethyl)pyrimidine + CO + 5'-deoxyadenosine + formate + L-methionine + 3 H(+). The protein operates within cofactor biosynthesis; thiamine diphosphate biosynthesis. Functionally, catalyzes the synthesis of the hydroxymethylpyrimidine phosphate (HMP-P) moiety of thiamine from aminoimidazole ribotide (AIR) in a radical S-adenosyl-L-methionine (SAM)-dependent reaction. This Bacillus cereus (strain Q1) protein is Phosphomethylpyrimidine synthase.